The sequence spans 217 residues: Membrane-associated progesterone receptor component 2 (217 aa).

Residue serine 15 is glycosylated (O-linked (Xyl...) (chondroitin sulfate) serine). Residues alanine 40–alanine 62 traverse the membrane as a helical segment. 3 positions are modified to phosphoserine: serine 84, serine 98, and serine 202. A Cytochrome b5 heme-binding domain is found at aspartate 96 to leucine 195. Residues lysine 196–aspartate 217 are disordered. Residues glutamate 200–aspartate 209 show a composition bias toward acidic residues. The residue at position 204 (tyrosine 204) is a Phosphotyrosine. Threonine 205 bears the Phosphothreonine mark.

The protein belongs to the cytochrome b5 family. MAPR subfamily. As to quaternary structure, interacts with PGRMC1. Interacts with AAAS. As to expression, expressed in brown adipose tissue, white adipose tissue, liver, heart, skeletal muscle, brain and adrenal gland.

The protein resides in the membrane. It localises to the nucleus envelope. Its subcellular location is the endoplasmic reticulum. The protein localises to the secreted. Its function is as follows. Required for the maintenance of uterine histoarchitecture and normal female reproductive lifespan. May serve as a universal non-classical progesterone receptor in the uterus. Intracellular heme chaperone required for delivery of labile, or signaling heme, to the nucleus. Plays a role in adipocyte function and systemic glucose homeostasis. In brown fat, which has a high demand for heme, delivery of labile heme in the nucleus regulates the activity of heme-responsive transcriptional repressors such as NR1D1 and BACH1. The chain is Membrane-associated progesterone receptor component 2 from Mus musculus (Mouse).